A 338-amino-acid polypeptide reads, in one-letter code: Tryptophan--tRNA ligase (338 aa).

Residues 18–20 and 26–27 each bind ATP; these read QPS and GN. The 'HIGH' region motif lies at 19-27; it reads PSGNLTIGN. Asp142 contacts L-tryptophan. Residues 154 to 156, Ile193, and 202 to 206 each bind ATP; these read GND and KMSKS. The 'KMSKS' region signature appears at 202–206; the sequence is KMSKS.

The protein belongs to the class-I aminoacyl-tRNA synthetase family. As to quaternary structure, homodimer.

The protein resides in the cytoplasm. It carries out the reaction tRNA(Trp) + L-tryptophan + ATP = L-tryptophyl-tRNA(Trp) + AMP + diphosphate + H(+). Functionally, catalyzes the attachment of tryptophan to tRNA(Trp). The protein is Tryptophan--tRNA ligase of Clostridium tetani (strain Massachusetts / E88).